The chain runs to 349 residues: Holliday junction branch migration complex subunit RuvB (349 aa).

Residues 1–15 (MSDDYRETDPTRQPE) show a composition bias toward basic and acidic residues. Positions 1-25 (MSDDYRETDPTRQPEDMGEGSLRPE) are disordered. Residues 1-183 (MSDDYRETDP…FGIPLRLVFY (183 aa)) are large ATPase domain (RuvB-L). Residues leucine 22, arginine 23, glycine 64, lysine 67, threonine 68, threonine 69, 130 to 132 (EDF), arginine 173, tyrosine 183, and arginine 220 contribute to the ATP site. Threonine 68 contacts Mg(2+). Residues 184–254 (TPEELRAIVS…LADAALGRLE (71 aa)) are small ATPAse domain (RuvB-S). The segment at 257–349 (ERGLDAMDRR…SSLEQDDSAP (93 aa)) is head domain (RuvB-H). Positions 293, 312, and 317 each coordinate DNA.

This sequence belongs to the RuvB family. In terms of assembly, homohexamer. Forms an RuvA(8)-RuvB(12)-Holliday junction (HJ) complex. HJ DNA is sandwiched between 2 RuvA tetramers; dsDNA enters through RuvA and exits via RuvB. An RuvB hexamer assembles on each DNA strand where it exits the tetramer. Each RuvB hexamer is contacted by two RuvA subunits (via domain III) on 2 adjacent RuvB subunits; this complex drives branch migration. In the full resolvosome a probable DNA-RuvA(4)-RuvB(12)-RuvC(2) complex forms which resolves the HJ.

Its subcellular location is the cytoplasm. The enzyme catalyses ATP + H2O = ADP + phosphate + H(+). The RuvA-RuvB-RuvC complex processes Holliday junction (HJ) DNA during genetic recombination and DNA repair, while the RuvA-RuvB complex plays an important role in the rescue of blocked DNA replication forks via replication fork reversal (RFR). RuvA specifically binds to HJ cruciform DNA, conferring on it an open structure. The RuvB hexamer acts as an ATP-dependent pump, pulling dsDNA into and through the RuvAB complex. RuvB forms 2 homohexamers on either side of HJ DNA bound by 1 or 2 RuvA tetramers; 4 subunits per hexamer contact DNA at a time. Coordinated motions by a converter formed by DNA-disengaged RuvB subunits stimulates ATP hydrolysis and nucleotide exchange. Immobilization of the converter enables RuvB to convert the ATP-contained energy into a lever motion, pulling 2 nucleotides of DNA out of the RuvA tetramer per ATP hydrolyzed, thus driving DNA branch migration. The RuvB motors rotate together with the DNA substrate, which together with the progressing nucleotide cycle form the mechanistic basis for DNA recombination by continuous HJ branch migration. Branch migration allows RuvC to scan DNA until it finds its consensus sequence, where it cleaves and resolves cruciform DNA. This chain is Holliday junction branch migration complex subunit RuvB, found in Gluconobacter oxydans (strain 621H) (Gluconobacter suboxydans).